A 162-amino-acid chain; its full sequence is UPF0114 protein PSEEN0819 (162 aa).

Helical transmembrane passes span 15 to 35, 53 to 73, and 136 to 156; these read LLAP…LKFF, LVLV…LVMV, and LMWY…MGYL.

The protein belongs to the UPF0114 family.

It localises to the cell membrane. The protein is UPF0114 protein PSEEN0819 of Pseudomonas entomophila (strain L48).